Here is a 393-residue protein sequence, read N- to C-terminus: tRNA-specific 2-thiouridylase MnmA (393 aa).

ATP contacts are provided by residues 19–26 (AMSGGVDS) and L45. Catalysis depends on C113, which acts as the Nucleophile. Residues C113 and C210 are joined by a disulfide bond. Position 137 (G137) interacts with ATP. An interaction with tRNA region spans residues 160-162 (RDQ). C210 serves as the catalytic Cysteine persulfide intermediate.

Belongs to the MnmA/TRMU family.

Its subcellular location is the cytoplasm. It carries out the reaction S-sulfanyl-L-cysteinyl-[protein] + uridine(34) in tRNA + AH2 + ATP = 2-thiouridine(34) in tRNA + L-cysteinyl-[protein] + A + AMP + diphosphate + H(+). In terms of biological role, catalyzes the 2-thiolation of uridine at the wobble position (U34) of tRNA, leading to the formation of s(2)U34. In Bradyrhizobium diazoefficiens (strain JCM 10833 / BCRC 13528 / IAM 13628 / NBRC 14792 / USDA 110), this protein is tRNA-specific 2-thiouridylase MnmA.